Reading from the N-terminus, the 484-residue chain is tRNA sulfurtransferase (484 aa).

Positions 63 to 167 (KEMGERLTCM…DKRLFVIHSQ (105 aa)) constitute a THUMP domain. ATP contacts are provided by residues 185-186 (LM), Lys267, Gly289, and Gln298. Cys346 and Cys457 are disulfide-bonded. The 79-residue stretch at 405-483 (ALAGQIVIDI…GHANVRVYRP (79 aa)) folds into the Rhodanese domain. Residue Cys457 is the Cysteine persulfide intermediate of the active site.

The protein belongs to the ThiI family.

It localises to the cytoplasm. It carries out the reaction [ThiI sulfur-carrier protein]-S-sulfanyl-L-cysteine + a uridine in tRNA + 2 reduced [2Fe-2S]-[ferredoxin] + ATP + H(+) = [ThiI sulfur-carrier protein]-L-cysteine + a 4-thiouridine in tRNA + 2 oxidized [2Fe-2S]-[ferredoxin] + AMP + diphosphate. The enzyme catalyses [ThiS sulfur-carrier protein]-C-terminal Gly-Gly-AMP + S-sulfanyl-L-cysteinyl-[cysteine desulfurase] + AH2 = [ThiS sulfur-carrier protein]-C-terminal-Gly-aminoethanethioate + L-cysteinyl-[cysteine desulfurase] + A + AMP + 2 H(+). Its pathway is cofactor biosynthesis; thiamine diphosphate biosynthesis. In terms of biological role, catalyzes the ATP-dependent transfer of a sulfur to tRNA to produce 4-thiouridine in position 8 of tRNAs, which functions as a near-UV photosensor. Also catalyzes the transfer of sulfur to the sulfur carrier protein ThiS, forming ThiS-thiocarboxylate. This is a step in the synthesis of thiazole, in the thiamine biosynthesis pathway. The sulfur is donated as persulfide by IscS. The protein is tRNA sulfurtransferase of Pseudomonas fluorescens (strain Pf0-1).